A 348-amino-acid polypeptide reads, in one-letter code: Rhodopsin (348 aa).

Met1 carries the post-translational modification N-acetylmethionine. At 1 to 36 (MNGTEGPNFYVPFSNKTGVVRSPFEAPQYYLAEPWQ) the chain is on the extracellular side. 2 N-linked (GlcNAc...) asparagine glycosylation sites follow: Asn2 and Asn15. Residues 37–61 (FSMLAAYMFLLIVLGFPINFLTLYV) form a helical membrane-spanning segment. Residues 62-73 (TVQHKKLRTPLN) are Cytoplasmic-facing. Residues 74 to 96 (YILLNLAVADLFMVFGGFTTTLY) form a helical membrane-spanning segment. The Extracellular portion of the chain corresponds to 97–110 (TSLHGYFVFGPTGC). Residues Cys110 and Cys187 are joined by a disulfide bond. The helical transmembrane segment at 111–133 (NLEGFFATLGGEIALWSLVVLAI) threads the bilayer. A 'Ionic lock' involved in activated form stabilization motif is present at residues 134–136 (ERY). Over 134 to 152 (ERYVVVCKPMSNFRFGENH) the chain is Cytoplasmic. The chain crosses the membrane as a helical span at residues 153–173 (AIMGVAFTWVMALACAAPPLV). Over 174 to 202 (GWSRYIPQGMQCSCGALYFTLKPEINNES) the chain is Extracellular. Zn(2+) is bound at residue Glu201. A helical transmembrane segment spans residues 203–224 (FVIYMFVVHFSIPLIVIFFCYG). Residues 225-252 (QLVFTVKEAAAQQQESATTQKAEKEVTR) are Cytoplasmic-facing. The helical transmembrane segment at 253–274 (MVIIMVIAFLICWLPYAGVAFY) threads the bilayer. Topologically, residues 275-286 (IFTHQGSDFGPI) are extracellular. Position 279 (Gln279) interacts with Zn(2+). The chain crosses the membrane as a helical span at residues 287 to 308 (FMTIPAFFAKSSSVYNPVIYIM). Lys296 bears the N6-(retinylidene)lysine mark. Residues 309–348 (MNKQFRNCMLTTLCCGKNPLGDDEASTTVSKTETSQVAPA) are Cytoplasmic-facing. 2 S-palmitoyl cysteine lipidation sites follow: Cys322 and Cys323. The segment at 330 to 348 (DDEASTTVSKTETSQVAPA) is interaction with SAG. Residue Ser334 is modified to Phosphoserine. Residue Ser334 is modified to Phosphoserine; by RK and GRK7. Phosphothreonine is present on residues Thr335 and Thr336. Phosphothreonine; by RK and GRK7 is present on residues Thr335 and Thr336. At Ser338 the chain carries Phosphoserine; by RK and GRK7. Thr340 and Thr342 each carry phosphothreonine. Position 343 is a phosphoserine; by RK and GRK7 (Ser343).

This sequence belongs to the G-protein coupled receptor 1 family. Opsin subfamily. In terms of assembly, homodimer. May form a complex composed of RHO, GRK1 and RCVRN in a Ca(2+)-dependent manner; RCVRN prevents the interaction between GRK1 and RHO. Interacts with GRK1. Interacts (phosphorylated form) with SAG. Interacts with GNAT1. Interacts with GNAT3. SAG and G-proteins compete for a common binding site. Interacts with PRCD; the interaction promotes PRCD stability. Forms a complex with ASAP1 and ARF4. Forms a complex with ASAP1, RAB11A, Rabin8/RAB3IP, ARF4 and RAB11FIP3; the complex regulates Golgi-to-cilia rhodopsin/RHO transport in photoreceptors. Phosphorylated on some or all of the serine and threonine residues present in the C-terminal region. In terms of processing, contains one covalently linked retinal chromophore. Upon light absorption, the covalently bound 11-cis-retinal is converted to all-trans-retinal. After hydrolysis of the Schiff base and release of the covalently bound all-trans-retinal, active rhodopsin is regenerated by binding of a fresh molecule of 11-cis-retinal.

It is found in the membrane. Its subcellular location is the cell projection. It localises to the cilium. The protein localises to the photoreceptor outer segment. Its function is as follows. Photoreceptor required for image-forming vision at low light intensity. Required for photoreceptor cell viability after birth. Light-induced isomerization of 11-cis to all-trans retinal triggers a conformational change that activates signaling via G-proteins. Subsequent receptor phosphorylation mediates displacement of the bound G-protein alpha subunit by the arrestin SAG and terminates signaling. In Ovis aries (Sheep), this protein is Rhodopsin (RHO).